Here is a 433-residue protein sequence, read N- to C-terminus: MVNATPFITTKSEEIFAAAQHLMPGGVSSPVRAFKSVGGQPIVFDRVEGAQIWDVDGNQYIDYVGTWGPAICGHAHPDVISALKQALDKGTSFGAPCAQENVLAEMVIDAVPSIEMVRFVNSGTEACMSVLRLMRAFTGREKIIKFEGCYHGHADMFLVKAGSGVATLGLPDSPGVPSNTTKATLTAPYNDLEAVKALFVENPDSIAGVILEPVVGNAGFILPDAGFLEGLRELTKEYGALLVFDEVMTGFRVSYGGAQARFGITPDLTTLGKVIGGGLPVGAYGGREEIMAMVAPAGPMYQAGTLSGNPLAMTAGIKTLEILQKPGSYEYLDKITKRLVDGLLAAAQDAGHEVCGGSISAMFGIFFAPGPVRNYEDAKLADTNKFARFHRGMLERGIYLAPSQYEAGFPSLAHTQEQIDQTIAVAKEVFATL.

Lys273 is subject to N6-(pyridoxal phosphate)lysine.

The protein belongs to the class-III pyridoxal-phosphate-dependent aminotransferase family. HemL subfamily. Homodimer. Requires pyridoxal 5'-phosphate as cofactor.

The protein localises to the cytoplasm. The enzyme catalyses (S)-4-amino-5-oxopentanoate = 5-aminolevulinate. Its pathway is porphyrin-containing compound metabolism; protoporphyrin-IX biosynthesis; 5-aminolevulinate from L-glutamyl-tRNA(Glu): step 2/2. It participates in porphyrin-containing compound metabolism; chlorophyll biosynthesis. The polypeptide is Glutamate-1-semialdehyde 2,1-aminomutase (hemL) (Synechocystis sp. (strain ATCC 27184 / PCC 6803 / Kazusa)).